The following is a 190-amino-acid chain: Lipid A acyltransferase PagP (190 aa).

A signal peptide spans 1–29; it reads MYVAMIIRKYFLIIALLLMPWLAIPSVSA. Catalysis depends on residues His62, Asp105, and Ser106.

This sequence belongs to the lipid A palmitoyltransferase family. In terms of assembly, homodimer.

It localises to the cell outer membrane. It carries out the reaction a lipid A + a 1,2-diacyl-sn-glycero-3-phosphocholine = a hepta-acyl lipid A + a 2-acyl-sn-glycero-3-phosphocholine. The enzyme catalyses a lipid IVA + a 1,2-diacyl-sn-glycero-3-phosphocholine = a lipid IVB + a 2-acyl-sn-glycero-3-phosphocholine. It catalyses the reaction a lipid IIA + a 1,2-diacyl-sn-glycero-3-phosphocholine = a lipid IIB + a 2-acyl-sn-glycero-3-phosphocholine. In terms of biological role, transfers a fatty acid residue from the sn-1 position of a phospholipid to the N-linked hydroxyfatty acid chain on the proximal unit of lipid A or its precursors. Required for resistance to cationic antimicrobial peptides (CAMPs). Modifications of lipid A with an acyl chain allow to evade host immune defenses by resisting antimicrobial peptides and attenuating the inflammatory response to infection triggered by lipopolysaccharide through the Toll-like receptor 4 (TLR4) signal transduction pathway. This is Lipid A acyltransferase PagP from Salmonella typhimurium (strain LT2 / SGSC1412 / ATCC 700720).